The primary structure comprises 330 residues: DNA-directed RNA polymerase subunit alpha (330 aa).

The interval 1–237 is alpha N-terminal domain (alpha-NTD); sequence MYTEINEMLT…RQLHAFVDMK (237 aa). Residues 251–330 are alpha C-terminal domain (alpha-CTD); the sequence is FDPVLLRSVD…ENWPPASLGE (80 aa).

The protein belongs to the RNA polymerase alpha chain family. As to quaternary structure, homodimer. The RNAP catalytic core consists of 2 alpha, 1 beta, 1 beta' and 1 omega subunit. When a sigma factor is associated with the core the holoenzyme is formed, which can initiate transcription.

The enzyme catalyses RNA(n) + a ribonucleoside 5'-triphosphate = RNA(n+1) + diphosphate. Its function is as follows. DNA-dependent RNA polymerase catalyzes the transcription of DNA into RNA using the four ribonucleoside triphosphates as substrates. The chain is DNA-directed RNA polymerase subunit alpha from Legionella pneumophila subsp. pneumophila (strain Philadelphia 1 / ATCC 33152 / DSM 7513).